We begin with the raw amino-acid sequence, 233 residues long: Coenzyme Q-binding protein COQ10 homolog, mitochondrial (233 aa).

Residues 1–34 constitute a mitochondrion transit peptide; the sequence is MAEKATSLFLRAMEISEKQSFDVMRRNSSCTIRH.

Belongs to the COQ10 family. Interacts with coenzyme Q.

It is found in the mitochondrion inner membrane. Functionally, required for the function of coenzyme Q in the respiratory chain. May serve as a chaperone or may be involved in the transport of Q6 from its site of synthesis to the catalytic sites of the respiratory complexes. The polypeptide is Coenzyme Q-binding protein COQ10 homolog, mitochondrial (Danio rerio (Zebrafish)).